Reading from the N-terminus, the 32-residue chain is Toxic phospholipase A2 (32 aa).

This sequence belongs to the phospholipase A2 family. Group III subfamily. Ca(2+) serves as cofactor.

It localises to the secreted. The protein resides in the nematocyst. The catalysed reaction is a 1,2-diacyl-sn-glycero-3-phosphocholine + H2O = a 1-acyl-sn-glycero-3-phosphocholine + a fatty acid + H(+). In terms of biological role, PLA2 catalyzes the calcium-dependent hydrolysis of the 2-acyl groups in 3-sn-phosphoglycerides. The sequence is that of Toxic phospholipase A2 from Rhopilema nomadica (Mediteranean medusa).